A 696-amino-acid polypeptide reads, in one-letter code: MDDDAGDGAASGGTKRKVTAASSSAAAKGKAAGKGKAASKASALATAKESSLLKQKSPAEFFAENKNIAGFDNPGKSLYTTMRELVENALDSAESISELPDIEIIIEEITKSKFNTMIGLVDRQRIDEELYDDFESAKAREKRLAKEARFQETQAKNAALGKKVKEAPAARGKGRGEAAFFRVTCKDNGRGMPHDDIPNMLGRVLSGTKYGLRQTRGKFGLGAKMALIWSKMSTGLPIEIKSSMKGQNFISFCLLDIDIHKNVPHVHLHEKRENKDRWHGAELQVIIEGNWTTHRSKILHYMRQMAVITPYAQFLFRFLSDSPDKNLTIQFARRTDVMPPIPLQTKHHPSAVDLLLIKRLISETTKQNLLQFLQHEFVNISKSHAERLIGEMGPDFSAKTTVKSLTSQQLVRIHQLFRQAKFDDPSGNCLSPAGEYNLRLGIIKELHPDLVATHASSPQVFEGHPFIVEAGISIGGKDVKHGLNIFRYANRIPLLFEQGADVITRTALKRINWSSYKINQQQDKIGVFVSIVSTKIPFKGTGKEYIGDDITEIASAVQSALKQCCLQLKSKIVKKLQARERQDRKRNLNRYIPDVARAIMETLGEIADESPPKRPRYDKEDEELLEKVNSEEVTEMTFRDCLTQHVEQVDYEMALEYAMQSGVSEEPREALYLNSLEGSYKFIDFQSPVFVFRFIP.

Positions 1 to 36 are disordered; that stretch reads MDDDAGDGAASGGTKRKVTAASSSAAAKGKAAGKGK. Positions 20–36 are enriched in low complexity; the sequence is AASSSAAAKGKAAGKGK. Residues Asn88, Asp187, 208-209, 217-224, and Lys543 each bind ATP; these read TK and GKFGLGAK.

Belongs to the TOP6B family. Homodimer. Heterotetramer of two TOP6A and two TOP6B subunits. Interacts with SPO11-4.

It is found in the nucleus. It carries out the reaction ATP-dependent breakage, passage and rejoining of double-stranded DNA.. In terms of biological role, component of the DNA topoisomerase VI involved in chromatin organization and progression of endoreduplication cycles. Relaxes both positive and negative superturns and exhibits a strong decatenase activity. The B subunit binds ATP. This Oryza sativa subsp. japonica (Rice) protein is DNA topoisomerase 6 subunit B (TOP6B).